Here is a 496-residue protein sequence, read N- to C-terminus: UDP-N-acetylmuramoylalanine--D-glutamate ligase (496 aa).

Glycine 130–threonine 136 provides a ligand contact to ATP.

The protein belongs to the MurCDEF family. As to quaternary structure, interacts with PknA. In terms of processing, phosphorylated by PknA.

The protein resides in the cytoplasm. It carries out the reaction UDP-N-acetyl-alpha-D-muramoyl-L-alanine + D-glutamate + ATP = UDP-N-acetyl-alpha-D-muramoyl-L-alanyl-D-glutamate + ADP + phosphate + H(+). It participates in cell wall biogenesis; peptidoglycan biosynthesis. Functionally, cell wall formation. Catalyzes the addition of glutamate to the nucleotide precursor UDP-N-acetylmuramoyl-L-alanine (UMA). This Mycobacterium tuberculosis (strain ATCC 25177 / H37Ra) protein is UDP-N-acetylmuramoylalanine--D-glutamate ligase.